The primary structure comprises 375 residues: 23S rRNA (uracil(747)-C(5))-methyltransferase RlmC (375 aa).

4 residues coordinate [4Fe-4S] cluster: Cys-3, Cys-11, Cys-14, and Cys-87. S-adenosyl-L-methionine contacts are provided by Gln-212, Phe-241, Glu-262, and Asn-307. The active-site Nucleophile is the Cys-334.

Belongs to the class I-like SAM-binding methyltransferase superfamily. RNA M5U methyltransferase family. RlmC subfamily.

The catalysed reaction is uridine(747) in 23S rRNA + S-adenosyl-L-methionine = 5-methyluridine(747) in 23S rRNA + S-adenosyl-L-homocysteine + H(+). Catalyzes the formation of 5-methyl-uridine at position 747 (m5U747) in 23S rRNA. The protein is 23S rRNA (uracil(747)-C(5))-methyltransferase RlmC of Escherichia coli O45:K1 (strain S88 / ExPEC).